The sequence spans 420 residues: tRNA (guanine-N(7)-)-methyltransferase non-catalytic subunit TRM82 (420 aa).

Over residues 59-68 (KENDSKRQKS) the composition is skewed to basic and acidic residues. Residues 59–82 (KENDSKRQKSESGQAKVSKIPTPG) are disordered. WD repeat units follow at residues 87–127 (PIYN…DNCL), 179–220 (GHVS…VIKN), 224–266 (GHHE…AKIE), and 340–379 (SYEDNVLDMCYIEATNTLISAHDSDKNQLFQQQKFDEETN).

This sequence belongs to the WD repeat TRM82 family. Forms a heterodimer with the catalytic subunit TRM8.

It is found in the nucleus. It participates in tRNA modification; N(7)-methylguanine-tRNA biosynthesis. Required for the formation of N(7)-methylguanine at position 46 (m7G46) in tRNA. In the complex, it is required to stabilize and induce conformational changes of the catalytic subunit. This is tRNA (guanine-N(7)-)-methyltransferase non-catalytic subunit TRM82 from Meyerozyma guilliermondii (strain ATCC 6260 / CBS 566 / DSM 6381 / JCM 1539 / NBRC 10279 / NRRL Y-324) (Yeast).